Here is a 57-residue protein sequence, read N- to C-terminus: UPF0434 protein Shal_2504 (57 aa).

The protein belongs to the UPF0434 family.

The chain is UPF0434 protein Shal_2504 from Shewanella halifaxensis (strain HAW-EB4).